The chain runs to 372 residues: NAD(P)H-quinone oxidoreductase subunit 1 (372 aa).

8 helical membrane passes run I27–V47, I97–V117, V128–M148, L176–V196, I204–L224, I266–V286, S308–L328, and F347–P367.

Belongs to the complex I subunit 1 family. In terms of assembly, NDH-1 is composed of at least 11 different subunits.

Its subcellular location is the cellular thylakoid membrane. It catalyses the reaction a plastoquinone + NADH + (n+1) H(+)(in) = a plastoquinol + NAD(+) + n H(+)(out). It carries out the reaction a plastoquinone + NADPH + (n+1) H(+)(in) = a plastoquinol + NADP(+) + n H(+)(out). Functionally, NDH-1 shuttles electrons from an unknown electron donor, via FMN and iron-sulfur (Fe-S) centers, to quinones in the respiratory and/or the photosynthetic chain. The immediate electron acceptor for the enzyme in this species is believed to be plastoquinone. Couples the redox reaction to proton translocation, and thus conserves the redox energy in a proton gradient. The polypeptide is NAD(P)H-quinone oxidoreductase subunit 1 (Prochlorococcus marinus (strain MIT 9301)).